The primary structure comprises 452 residues: Serine incorporator 2 (452 aa).

A run of 11 helical transmembrane segments spans residues 5-25, 41-61, 96-116, 131-151, 158-178, 205-225, 236-256, 266-286, 319-339, 387-407, and 426-446; these read LGAC…PCIL, FFTV…SPGV, AVYR…LLMV, GFWF…FYIP, IWFY…LLLL, LFFF…LLFV, GKVF…VAIL, SGLL…WLAL, WDAP…FISL, FFHL…TNWY, and ICAS…PLLL.

It belongs to the TDE1 family.

Its subcellular location is the cell membrane. It carries out the reaction a 1,2-diacyl-sn-glycero-3-phospho-L-serine(in) = a 1,2-diacyl-sn-glycero-3-phospho-L-serine(out). The enzyme catalyses a 1,2-diacyl-sn-glycero-3-phosphocholine(in) = a 1,2-diacyl-sn-glycero-3-phosphocholine(out). The catalysed reaction is a 1,2-diacyl-sn-glycero-3-phosphoethanolamine(in) = a 1,2-diacyl-sn-glycero-3-phosphoethanolamine(out). In terms of biological role, non-ATP-dependent, non-specific lipid transporter for phosphatidylserine, phosphatidylcholine, and phosphatidylethanolamine. Functions as a scramblase that flips lipids in both directions across the membrane. In contrast to SERINC3 and SERINC5, has no effect on gammaretrovirus particles infectivity. This Bos taurus (Bovine) protein is Serine incorporator 2 (SERINC2).